The chain runs to 121 residues: Putative membrane protein insertion efficiency factor (121 aa).

It belongs to the UPF0161 family.

Its subcellular location is the cell inner membrane. Its function is as follows. Could be involved in insertion of integral membrane proteins into the membrane. This Rhodopseudomonas palustris (strain HaA2) protein is Putative membrane protein insertion efficiency factor.